The sequence spans 445 residues: O-fucosyltransferase 23 (445 aa).

A helical; Signal-anchor for type II membrane protein membrane pass occupies residues 12–34; the sequence is IFSKSVACKCLVLVGIALFYRAL. 2 N-linked (GlcNAc...) asparagine glycosylation sites follow: Asn97 and Asn179. Position 258-260 (258-260) interacts with substrate; it reads HMR. Asn294 is a glycosylation site (N-linked (GlcNAc...) asparagine). 374–375 contacts substrate; that stretch reads TF. An N-linked (GlcNAc...) asparagine glycan is attached at Asn424.

Belongs to the glycosyltransferase GT106 family. As to expression, expressed in dry pollen grains and germinating pollen grains.

The protein resides in the golgi apparatus membrane. It functions in the pathway glycan metabolism. Functionally, probable protein O-fucosyltransferase required for correct pollen tube penetration through the stigma-style interface. May be involved in protein O-glycosylation events during pollen-pistil interactions. The protein is O-fucosyltransferase 23 of Arabidopsis thaliana (Mouse-ear cress).